The sequence spans 124 residues: Small ribosomal subunit protein uS12 (124 aa).

At D89 the chain carries 3-methylthioaspartic acid.

The protein belongs to the universal ribosomal protein uS12 family. In terms of assembly, part of the 30S ribosomal subunit. Contacts proteins S8 and S17. May interact with IF1 in the 30S initiation complex.

With S4 and S5 plays an important role in translational accuracy. Its function is as follows. Interacts with and stabilizes bases of the 16S rRNA that are involved in tRNA selection in the A site and with the mRNA backbone. Located at the interface of the 30S and 50S subunits, it traverses the body of the 30S subunit contacting proteins on the other side and probably holding the rRNA structure together. The combined cluster of proteins S8, S12 and S17 appears to hold together the shoulder and platform of the 30S subunit. This Buchnera aphidicola subsp. Schizaphis graminum (strain Sg) protein is Small ribosomal subunit protein uS12.